A 451-amino-acid polypeptide reads, in one-letter code: Clusterin (451 aa).

The first 18 residues, Met-1 to Gly-18, serve as a signal peptide directing secretion. 5 disulfides stabilise this stretch: Cys-98–Cys-314, Cys-109–Cys-306, Cys-112–Cys-303, Cys-117–Cys-296, and Cys-125–Cys-286. Residues Asn-99, Asn-141, Asn-278, Asn-355, Asn-375, and Asn-447 are each glycosylated (N-linked (GlcNAc...) asparagine).

It belongs to the clusterin family. Antiparallel disulfide-linked heterodimer of an alpha chain and a beta chain. Self-associates and forms higher oligomers. Interacts with a broad range of misfolded proteins. Post-translationally, proteolytically cleaved on its way through the secretory system, probably within the Golgi lumen. In terms of processing, polyubiquitinated, leading to proteasomal degradation.

It localises to the secreted. The protein localises to the cytoplasmic vesicle. Its subcellular location is the secretory vesicle. The protein resides in the chromaffin granule. It is found in the nucleus. It localises to the cytoplasm. The protein localises to the mitochondrion membrane. Its subcellular location is the cytosol. The protein resides in the endoplasmic reticulum. Functions as extracellular chaperone that prevents aggregation of nonnative proteins. Prevents stress-induced aggregation of blood plasma proteins. Does not require ATP. Maintains partially unfolded proteins in a state appropriate for subsequent refolding by other chaperones, such as HSPA8/HSC70. Does not refold proteins by itself. Binding to cell surface receptors triggers internalization of the chaperone-client complex and subsequent lysosomal or proteasomal degradation. When secreted, protects cells against apoptosis and against cytolysis by complement: inhibits assembly of the complement membrane attack complex (MAC) by preventing polymerization of C9 pore component of the MAC complex. Intracellular forms interact with ubiquitin and SCF (SKP1-CUL1-F-box protein) E3 ubiquitin-protein ligase complexes and promote the ubiquitination and subsequent proteasomal degradation of target proteins. Modulates NF-kappa-B transcriptional activity. Promotes apoptosis when in the nucleus. Inhibits apoptosis when associated with the mitochondrial membrane by interference with BAX-dependent release of cytochrome c into the cytoplasm. Plays a role in the regulation of cell proliferation. The sequence is that of Clusterin (CLU) from Coturnix japonica (Japanese quail).